The primary structure comprises 271 residues: Magnetosome protein MamX (271 aa).

The Cytoplasmic portion of the chain corresponds to 1-10; sequence MSSKAVAHPN. The chain crosses the membrane as a helical span at residues 11–31; the sequence is IAVWIMALGIAFSMALVLTAV. Topologically, residues 32 to 271 are lumenal; it reads FNANPWEDHT…NAGGMDAEER (240 aa). Positions 48-71 match the MCR (magnetochrome) 1 motif; sequence IVAGMPAPHRDGREKMVCSSCHIV. The heme site is built by Cys65, Cys68, His69, Cys104, Cys107, and His108. The MCR 2 signature appears at 87–110; that stretch reads IVQGTPAPHVDGREKMPCASCHTI.

It belongs to the magnetosome MamX family. Heme serves as cofactor.

The protein localises to the magnetosome membrane. In terms of biological role, required for correct biomineralization of the magnetosome, may be involved in redox control of biomineralization. May function with MamY, MamZ amd Mms6. The polypeptide is Magnetosome protein MamX (mamX) (Paramagnetospirillum magneticum (strain ATCC 700264 / AMB-1) (Magnetospirillum magneticum)).